The primary structure comprises 281 residues: 3-hydroxyanthranilate 3,4-dioxygenase (281 aa).

The domain A (catalytic) stretch occupies residues 1–162 (MAGVTAIEIP…SNEFKTGKPG (162 aa)). Arg-45 lines the O2 pocket. Residues His-49, Glu-55, and His-93 each coordinate Fe cation. Glu-55 provides a ligand contact to substrate. Residues Arg-97 and Glu-107 each coordinate substrate. Positions 163-179 (KGTFACNAPYEARWTDL) are linker. The domain B stretch occupies residues 180–281 (PVPINRKEFI…GFAITIRMPG (102 aa)).

Belongs to the 3-HAO family. Fe(2+) is required as a cofactor.

It localises to the cytoplasm. It catalyses the reaction 3-hydroxyanthranilate + O2 = (2Z,4Z)-2-amino-3-carboxymuconate 6-semialdehyde. The protein operates within cofactor biosynthesis; NAD(+) biosynthesis; quinolinate from L-kynurenine: step 3/3. Catalyzes the oxidative ring opening of 3-hydroxyanthranilate to 2-amino-3-carboxymuconate semialdehyde, which spontaneously cyclizes to quinolinate. The chain is 3-hydroxyanthranilate 3,4-dioxygenase (haao-1) from Caenorhabditis briggsae.